Consider the following 362-residue polypeptide: G-protein coupled receptor homolog US27 (362 aa).

Topologically, residues 1–34 (MTTSTNNQTLTQVSNMTNHTLNSTEIYQLFEYTR) are virion surface. N-linked (GlcNAc...) asparagine; by host glycosylation is found at N7, N15, N18, and N22. Residues 35-58 (LGVWLMCIVGTFLNVLVITTILYY) traverse the membrane as a helical segment. Residues 59-67 (RRKKKSPSD) lie on the Intravirion side of the membrane. A helical membrane pass occupies residues 68 to 90 (TYICNLAVADLLIVVGLPFFLEY). The Virion surface segment spans residues 91 to 104 (AKHHPKLSREVVCS). Residues 105 to 126 (GLNACFYICLFAGVCFLINLSM) traverse the membrane as a helical segment. Over 127-148 (DRYCVIVWGVELNRVRNNKRAT) the chain is Intravirion. Residues 149–167 (CWVVIFWILAVLMGMPHYL) traverse the membrane as a helical segment. The Virion surface portion of the chain corresponds to 168 to 193 (MYSHTNNECVGEFANETSGWFPVFLN). The helical transmembrane segment at 194–213 (TKVNICGYLAPIALMAYTYN) threads the bilayer. Over 214 to 233 (RMVRFIINYVGKWHMQTLHV) the chain is Intravirion. Residues 234–257 (LLVVVVSFASFWFPFNLALFLESI) form a helical membrane-spanning segment. Topologically, residues 258 to 274 (RLLAGVYNDTLQNVIIF) are virion surface. The chain crosses the membrane as a helical span at residues 275 to 298 (CLYVGQFLAYVRACLNPGIYILVG). Residues 299–362 (TQMRKDMWTT…MESGEEEFLL (64 aa)) lie on the Intravirion side of the membrane. The interval 341–362 (TKRTHYDRKNAPMESGEEEFLL) is disordered.

It belongs to the G-protein coupled receptor 1 family. In terms of assembly, heterodimer with US28. Interacts with host Gi alpha-1 subunit GNAI1; this interaction does not lead to the catalytic activation of Gi complex.

The protein localises to the virion. Its subcellular location is the host cell membrane. In terms of biological role, interacts with the host Gi complex without activating it, thereby probably interfering with the chemokine-Gi signaling. May also function as a G protein sink to sequester G protein from the cell surface via internalization. Plays an important role in spread of HCMV via the extracellular route. The sequence is that of G-protein coupled receptor homolog US27 (US27) from Homo sapiens (Human).